The sequence spans 365 residues: tRNA/tmRNA (uracil-C(5))-methyltransferase (365 aa).

S-adenosyl-L-methionine contacts are provided by glutamine 189, tyrosine 217, asparagine 222, glutamate 238, and aspartate 298. Cysteine 323 serves as the catalytic Nucleophile. The active-site Proton acceptor is the glutamate 357.

It belongs to the class I-like SAM-binding methyltransferase superfamily. RNA M5U methyltransferase family. TrmA subfamily.

It catalyses the reaction uridine(54) in tRNA + S-adenosyl-L-methionine = 5-methyluridine(54) in tRNA + S-adenosyl-L-homocysteine + H(+). The catalysed reaction is uridine(341) in tmRNA + S-adenosyl-L-methionine = 5-methyluridine(341) in tmRNA + S-adenosyl-L-homocysteine + H(+). Its function is as follows. Dual-specificity methyltransferase that catalyzes the formation of 5-methyluridine at position 54 (m5U54) in all tRNAs, and that of position 341 (m5U341) in tmRNA (transfer-mRNA). This is tRNA/tmRNA (uracil-C(5))-methyltransferase from Shewanella woodyi (strain ATCC 51908 / MS32).